The following is a 336-amino-acid chain: Aspartate--ammonia ligase (336 aa).

The protein belongs to the class-II aminoacyl-tRNA synthetase family. AsnA subfamily.

It localises to the cytoplasm. The catalysed reaction is L-aspartate + NH4(+) + ATP = L-asparagine + AMP + diphosphate + H(+). Its pathway is amino-acid biosynthesis; L-asparagine biosynthesis; L-asparagine from L-aspartate (ammonia route): step 1/1. This is Aspartate--ammonia ligase from Lactobacillus acidophilus (strain ATCC 700396 / NCK56 / N2 / NCFM).